Consider the following 442-residue polypeptide: D-inositol 3-phosphate glycosyltransferase (442 aa).

A 1D-myo-inositol 3-phosphate-binding site is contributed by His-26. Residues 32–33 and Gly-40 each bind UDP-N-acetyl-alpha-D-glucosamine; that span reads QP. Residues 37-42, Lys-95, Tyr-128, Thr-152, and Arg-172 contribute to the 1D-myo-inositol 3-phosphate site; that span reads DAGGMN. Residues Arg-246, Lys-251, and Gln-304 each coordinate UDP-N-acetyl-alpha-D-glucosamine. Tyr-313, Arg-314, and Ala-316 together coordinate Mg(2+). Glu-326 and Glu-334 together coordinate UDP-N-acetyl-alpha-D-glucosamine. Thr-340 is a Mg(2+) binding site.

It belongs to the glycosyltransferase group 1 family. MshA subfamily. Homodimer.

It catalyses the reaction 1D-myo-inositol 3-phosphate + UDP-N-acetyl-alpha-D-glucosamine = 1D-myo-inositol 2-acetamido-2-deoxy-alpha-D-glucopyranoside 3-phosphate + UDP + H(+). In terms of biological role, catalyzes the transfer of a N-acetyl-glucosamine moiety to 1D-myo-inositol 3-phosphate to produce 1D-myo-inositol 2-acetamido-2-deoxy-glucopyranoside 3-phosphate in the mycothiol biosynthesis pathway. The protein is D-inositol 3-phosphate glycosyltransferase of Mycolicibacterium gilvum (strain PYR-GCK) (Mycobacterium gilvum (strain PYR-GCK)).